An 835-amino-acid chain; its full sequence is Leucine--tRNA ligase (835 aa).

The 'HIGH' region motif lies at 42 to 52; the sequence is PYPSGRIHMGH. Residues 612–616 carry the 'KMSKS' region motif; sequence KMSKS. ATP is bound at residue Lys615.

This sequence belongs to the class-I aminoacyl-tRNA synthetase family.

It is found in the cytoplasm. It carries out the reaction tRNA(Leu) + L-leucine + ATP = L-leucyl-tRNA(Leu) + AMP + diphosphate. The sequence is that of Leucine--tRNA ligase from Rhizorhabdus wittichii (strain DSM 6014 / CCUG 31198 / JCM 15750 / NBRC 105917 / EY 4224 / RW1) (Sphingomonas wittichii).